Consider the following 166-residue polypeptide: Crossover junction endodeoxyribonuclease RuvC (166 aa).

Active-site residues include Asp-9, Glu-70, and Asp-144. Residues Asp-9, Glu-70, and Asp-144 each coordinate Mg(2+).

The protein belongs to the RuvC family. Homodimer which binds Holliday junction (HJ) DNA. The HJ becomes 2-fold symmetrical on binding to RuvC with unstacked arms; it has a different conformation from HJ DNA in complex with RuvA. In the full resolvosome a probable DNA-RuvA(4)-RuvB(12)-RuvC(2) complex forms which resolves the HJ. It depends on Mg(2+) as a cofactor.

Its subcellular location is the cytoplasm. The catalysed reaction is Endonucleolytic cleavage at a junction such as a reciprocal single-stranded crossover between two homologous DNA duplexes (Holliday junction).. Functionally, the RuvA-RuvB-RuvC complex processes Holliday junction (HJ) DNA during genetic recombination and DNA repair. Endonuclease that resolves HJ intermediates. Cleaves cruciform DNA by making single-stranded nicks across the HJ at symmetrical positions within the homologous arms, yielding a 5'-phosphate and a 3'-hydroxyl group; requires a central core of homology in the junction. The consensus cleavage sequence is 5'-(A/T)TT(C/G)-3'. Cleavage occurs on the 3'-side of the TT dinucleotide at the point of strand exchange. HJ branch migration catalyzed by RuvA-RuvB allows RuvC to scan DNA until it finds its consensus sequence, where it cleaves and resolves the cruciform DNA. This is Crossover junction endodeoxyribonuclease RuvC from Neorickettsia sennetsu (strain ATCC VR-367 / Miyayama) (Ehrlichia sennetsu).